The primary structure comprises 571 residues: Proline--tRNA ligase (571 aa).

Belongs to the class-II aminoacyl-tRNA synthetase family. ProS type 1 subfamily. Homodimer.

Its subcellular location is the cytoplasm. The catalysed reaction is tRNA(Pro) + L-proline + ATP = L-prolyl-tRNA(Pro) + AMP + diphosphate. Catalyzes the attachment of proline to tRNA(Pro) in a two-step reaction: proline is first activated by ATP to form Pro-AMP and then transferred to the acceptor end of tRNA(Pro). As ProRS can inadvertently accommodate and process non-cognate amino acids such as alanine and cysteine, to avoid such errors it has two additional distinct editing activities against alanine. One activity is designated as 'pretransfer' editing and involves the tRNA(Pro)-independent hydrolysis of activated Ala-AMP. The other activity is designated 'posttransfer' editing and involves deacylation of mischarged Ala-tRNA(Pro). The misacylated Cys-tRNA(Pro) is not edited by ProRS. The protein is Proline--tRNA ligase of Shewanella baltica (strain OS155 / ATCC BAA-1091).